Reading from the N-terminus, the 112-residue chain is Hydrogenase maturation factor HypA (112 aa).

Residue His2 participates in Ni(2+) binding. Positions 73, 76, 88, and 91 each coordinate Zn(2+).

This sequence belongs to the HypA/HybF family.

Its function is as follows. Involved in the maturation of [NiFe] hydrogenases. Required for nickel insertion into the metal center of the hydrogenase. The polypeptide is Hydrogenase maturation factor HypA (Synechococcus elongatus (strain ATCC 33912 / PCC 7942 / FACHB-805) (Anacystis nidulans R2)).